Here is a 602-residue protein sequence, read N- to C-terminus: Cholinesterase (602 aa).

Positions 1-28 (MQSRSTVIYIRFVLWFLLLWVLFEKSHT) are cleaved as a signal peptide. Residues Asn-85 and Asn-134 are each glycosylated (N-linked (GlcNAc...) asparagine). 144-145 (GS) serves as a coordination point for substrate. Ser-226 serves as the catalytic Acyl-ester intermediate. Ser-226 carries the phosphoserine modification. N-linked (GlcNAc...) asparagine glycans are attached at residues Asn-269 and Asn-284. Catalysis depends on Glu-353, which acts as the Charge relay system. Asn-369 carries N-linked (GlcNAc...) asparagine glycosylation. His-466 functions as the Charge relay system in the catalytic mechanism. N-linked (GlcNAc...) asparagine glycosylation is found at Asn-483, Asn-509, Asn-513, and Asn-514.

It belongs to the type-B carboxylesterase/lipase family. Homotetramer; disulfide-linked. Dimer of dimers. As to expression, present in most cells except erythrocytes.

Its subcellular location is the secreted. It carries out the reaction an acylcholine + H2O = a carboxylate + choline + H(+). Functionally, esterase with broad substrate specificity. Contributes to the inactivation of the neurotransmitter acetylcholine. Can degrade neurotoxic organophosphate esters. In Bos taurus (Bovine), this protein is Cholinesterase (BCHE).